The chain runs to 360 residues: Lipid-A-disaccharide synthase (360 aa).

The protein belongs to the LpxB family.

The enzyme catalyses a lipid X + a UDP-2-N,3-O-bis[(3R)-3-hydroxyacyl]-alpha-D-glucosamine = a lipid A disaccharide + UDP + H(+). The protein operates within bacterial outer membrane biogenesis; LPS lipid A biosynthesis. In terms of biological role, condensation of UDP-2,3-diacylglucosamine and 2,3-diacylglucosamine-1-phosphate to form lipid A disaccharide, a precursor of lipid A, a phosphorylated glycolipid that anchors the lipopolysaccharide to the outer membrane of the cell. This is Lipid-A-disaccharide synthase from Helicobacter pylori (strain Shi470).